Here is a 272-residue protein sequence, read N- to C-terminus: Pantothenate synthetase (272 aa).

Residue 27 to 34 (MGALHNGH) coordinates ATP. His-34 (proton donor) is an active-site residue. A (R)-pantoate-binding site is contributed by Gln-58. Gln-58 contributes to the beta-alanine binding site. ATP is bound at residue 143–146 (GKKD). Residue Gln-149 coordinates (R)-pantoate. Residues Val-172 and 180–183 (LSSR) contribute to the ATP site.

The protein belongs to the pantothenate synthetase family. In terms of assembly, homodimer.

The protein localises to the cytoplasm. The enzyme catalyses (R)-pantoate + beta-alanine + ATP = (R)-pantothenate + AMP + diphosphate + H(+). The protein operates within cofactor biosynthesis; (R)-pantothenate biosynthesis; (R)-pantothenate from (R)-pantoate and beta-alanine: step 1/1. Catalyzes the condensation of pantoate with beta-alanine in an ATP-dependent reaction via a pantoyl-adenylate intermediate. In Aliarcobacter butzleri (strain RM4018) (Arcobacter butzleri), this protein is Pantothenate synthetase.